Here is a 151-residue protein sequence, read N- to C-terminus: Copper transporter 2 (151 aa).

The next 2 helical transmembrane spans lie at 42–62 and 97–117; these read GARGGMYALAILFMFALAVLL and VAYLIMLALMSFNGGVFLAIV.

Belongs to the copper transporter (Ctr) (TC 1.A.56) family. SLC31A subfamily. As to quaternary structure, self-interacts. Interacts with SWEET11 and COPT1.

The protein localises to the cell membrane. In terms of biological role, involved in the transport of copper, in cooperation with SWEET11 and COPT1. Contributes to the removal of copper (Cu) from xylem, and thus to the sensitivity toward bacterial pathogens such as X.oryzae pv. oryzae (Xoo). This Oryza sativa subsp. japonica (Rice) protein is Copper transporter 2 (COPT2).